A 272-amino-acid chain; its full sequence is 2-amino-3,7-dideoxy-D-threo-hept-6-ulosonate synthase (272 aa).

The Proton acceptor role is filled by D33. 1-deoxy-D-threo-hexo-2,5-diulose 6-phosphate-binding positions include 33 to 37 (DHGVS) and 153 to 155 (YPR). The active-site Proton donor is Y153. The Schiff-base intermediate with substrate role is filled by K184. Residues 209 to 210 (GG) and 237 to 238 (GR) contribute to the 1-deoxy-D-threo-hexo-2,5-diulose 6-phosphate site.

It belongs to the DeoC/FbaB aldolase family. ADHS subfamily. Homodecamer.

The enzyme catalyses 1-deoxy-D-threo-hexo-2,5-diulose 6-phosphate + L-aspartate 4-semialdehyde = 2,3-dioxopropyl phosphate + 2-amino-2,3,7-trideoxy-D-lyxo-hept-6-ulosonate. Functionally, catalyzes a transaldol reaction between 6-deoxy-5-ketofructose 1-phosphate (DKFP) and L-aspartate semialdehyde (ASA) with an elimination of hydroxypyruvaldehyde phosphate to yield 2-amino-3,7-dideoxy-D-threo-hept-6-ulosonate (ADH). Plays a key role in an alternative pathway of the biosynthesis of 3-dehydroquinate (DHQ), which is involved in the canonical pathway for the biosynthesis of aromatic amino acids. The polypeptide is 2-amino-3,7-dideoxy-D-threo-hept-6-ulosonate synthase (Methanococcus vannielii (strain ATCC 35089 / DSM 1224 / JCM 13029 / OCM 148 / SB)).